Consider the following 305-residue polypeptide: Alpha-N-acetylgalactosaminide alpha-2,6-sialyltransferase 3 (305 aa).

Residues 1-8 (MACILKRK) are Cytoplasmic-facing. Residues 9–28 (PVLVVSFIALCILLLAMRLV) traverse the membrane as a helical; Signal-anchor for type II membrane protein segment. Topologically, residues 29–305 (NDATFPLLLN…VFTHPNWTLS (277 aa)) are lumenal. A disulfide bond links cysteine 80 and cysteine 229. Residues asparagine 239 and asparagine 301 are each glycosylated (N-linked (GlcNAc...) asparagine).

The protein belongs to the glycosyltransferase 29 family. In adult tissues, high expression in brain, lung and heart and to a lesser extent in kidney, mammary gland, spleen, testis and thymus.

The protein localises to the golgi apparatus membrane. It catalyses the reaction an alpha-Neu5Ac-(2-&gt;3)-beta-D-Gal-(1-&gt;3)-D-GlcNAc derivative + CMP-N-acetyl-beta-neuraminate = an alpha-Neu5Ac-(2-&gt;3)-beta-D-Gal-(1-&gt;3)-[alpha-Neu5Ac-(2-&gt;6)]-D-GlcNAc derivative + CMP + H(+). The catalysed reaction is a ganglioside GM1b (d18:1(4E)) + CMP-N-acetyl-beta-neuraminate = a ganglioside GD1alpha (d18:1(4E)) + CMP + H(+). The enzyme catalyses a globoside MSGG + CMP-N-acetyl-beta-neuraminate = a globoside DSGG + CMP + H(+). It carries out the reaction 3-O-[alpha-Neu5Ac-(2-&gt;3)-beta-D-Gal-(1-&gt;3)-alpha-D-GalNAc]-L-Ser-[protein] + CMP-N-acetyl-beta-neuraminate = a 3-O-{alpha-Neu5Ac-(2-&gt;3)-beta-D-Gal-(1-&gt;3)-[alpha-Neu5Ac-(2-&gt;6)]-alpha-D-GalNAc}-L-seryl-[protein] + CMP + H(+). It catalyses the reaction 3-O-[alpha-Neu5Ac-(2-&gt;3)-beta-D-Gal-(1-&gt;3)-alpha-D-GalNAc]-L-Thr-[protein] + CMP-N-acetyl-beta-neuraminate = a 3-O-{alpha-Neu5Ac-(2-&gt;3)-beta-D-Gal-(1-&gt;3)-[alpha-Neu5Ac-(2-&gt;6)]-alpha-D-GalNAc}-L-threonyl-[protein] + CMP + H(+). Its pathway is protein modification; protein glycosylation. It participates in glycolipid biosynthesis. Its function is as follows. Transfers the sialyl group (N-acetyl-alpha-neuraminyl or NeuAc) from CMP-NeuAc to the GalNAc residue on the NeuAc-alpha-2,3-Gal-beta-1,3-GalNAc sequence of glycoproteins and glycolipids forming an alpha-2,6-linkage. Produces branched type disialyl structures by transfer of a sialyl group onto a GalNAc residue inside the backbone core chains. ST6GalNAcIII prefers glycolipids to glycoproteins, predominantly catalyzing the biosynthesis of ganglioside GD1alpha from GM1b. GD1alpha is a critical molecule in the communication and interaction between neuronal cells and their supportive cells, particularly in brain tissues, and functions as an adhesion molecule in the process of metastasis. Sialylation of glycoproteins or glycosphingolipids is very important in tumor development, neuronal development, nerve repair, immunological processes and regulation of hormone sensitivity. The protein is Alpha-N-acetylgalactosaminide alpha-2,6-sialyltransferase 3 (St6galnac3) of Mus musculus (Mouse).